We begin with the raw amino-acid sequence, 364 residues long: Caffeic acid 3-O-methyltransferase 3 (364 aa).

Substrate is bound at residue 129–135 (MNQDKVL). A substrate binding region spans residues 161-179 (AFEYHGTDPRFNKVFNKGM). Residues G207, D230, D250, M251, and K264 each contribute to the S-adenosyl-L-methionine site. H268 functions as the Proton acceptor in the catalytic mechanism.

It belongs to the class I-like SAM-binding methyltransferase superfamily. Cation-independent O-methyltransferase family. COMT subfamily. Homodimer.

The catalysed reaction is (E)-caffeate + S-adenosyl-L-methionine = (E)-ferulate + S-adenosyl-L-homocysteine + H(+). It functions in the pathway aromatic compound metabolism; phenylpropanoid biosynthesis. In terms of biological role, catalyzes the conversion of caffeic acid to ferulic acid and of 5-hydroxyferulic acid to sinapic acid. The resulting products may subsequently be converted to the corresponding alcohols that are incorporated into lignins. The polypeptide is Caffeic acid 3-O-methyltransferase 3 (HOMT3) (Populus kitakamiensis (Aspen)).